The primary structure comprises 395 residues: Cystathionine beta-lyase MetC (395 aa).

K210 is modified (N6-(pyridoxal phosphate)lysine).

It belongs to the trans-sulfuration enzymes family. As to quaternary structure, homotetramer; dimer of dimers. Pyridoxal 5'-phosphate serves as cofactor.

It localises to the cytoplasm. The enzyme catalyses L,L-cystathionine + H2O = L-homocysteine + pyruvate + NH4(+). The catalysed reaction is L-cysteine + H2O = hydrogen sulfide + pyruvate + NH4(+) + H(+). It catalyses the reaction an S-substituted L-cysteine + H2O = a thiol + pyruvate + NH4(+). Its pathway is amino-acid biosynthesis; L-methionine biosynthesis via de novo pathway; L-homocysteine from L-cystathionine: step 1/1. L-cysteine inhibits cystathionine beta-lyase activity competitively. Inhibited by aminoethoxyvinylglycine (AVG). Its function is as follows. Primarily catalyzes the cleavage of cystathionine to homocysteine, pyruvate and ammonia during methionine biosynthesis. Also exhibits cysteine desulfhydrase activity, producing sulfide from cysteine. In addition, under certain growth conditions, exhibits significant alanine racemase coactivity. This Escherichia coli (strain K12) protein is Cystathionine beta-lyase MetC.